We begin with the raw amino-acid sequence, 80 residues long: MPKKNEAPASFEKALSELEQIVTRLESGDLPLEEALNEFERGVQLARQGQDKLQQAEQRVQILLSDNEDASLTPFTPDNE.

The protein belongs to the XseB family. As to quaternary structure, heterooligomer composed of large and small subunits.

It localises to the cytoplasm. The catalysed reaction is Exonucleolytic cleavage in either 5'- to 3'- or 3'- to 5'-direction to yield nucleoside 5'-phosphates.. Functionally, bidirectionally degrades single-stranded DNA into large acid-insoluble oligonucleotides, which are then degraded further into small acid-soluble oligonucleotides. The chain is Exodeoxyribonuclease 7 small subunit from Escherichia coli (strain SE11).